We begin with the raw amino-acid sequence, 304 residues long: UDP-N-acetylenolpyruvoylglucosamine reductase (304 aa).

The 167-residue stretch at 32–198 (RVGGPADILV…LSAELELQEG (167 aa)) folds into the FAD-binding PCMH-type domain. The active site involves arginine 177. Catalysis depends on serine 227, which acts as the Proton donor. Glutamate 297 is an active-site residue.

It belongs to the MurB family. FAD serves as cofactor.

Its subcellular location is the cytoplasm. The catalysed reaction is UDP-N-acetyl-alpha-D-muramate + NADP(+) = UDP-N-acetyl-3-O-(1-carboxyvinyl)-alpha-D-glucosamine + NADPH + H(+). The protein operates within cell wall biogenesis; peptidoglycan biosynthesis. Cell wall formation. This Clostridioides difficile (strain 630) (Peptoclostridium difficile) protein is UDP-N-acetylenolpyruvoylglucosamine reductase.